A 361-amino-acid chain; its full sequence is MMDSPKKLGYHMPAEYEPHHGTLMIWPTRPGSWPFQGKAAKRAFTQIIETIAEGERVYLLVEQAYLYEAQSYLGDKVVYLDIPTNDAWARDTGPTILVNDKGKKLAVDWAFNAWGGTYDGLYQDYEEDDQVASRFAEVLEKPVYDAKPFVLEGGAIHSDGQGTILVTESCLLSPGRNPNLTKEEIENTLLESLGAEKVIWLPYGIYQDETNEHVDNVAAFVGSAELVLAWTDDENDPQYAMSKADLELLEQETDAKGCHFTIHKLPIPAVRQVVTEEDLPGYIYEEGEEERYAGERLAASYVNFYIANKAVLVPQFEDVNDQVAIDILSKCFPDRKVVGIPARDILLGGGNIHCITQQIPE.

The active-site Amidino-cysteine intermediate is the cysteine 354.

Belongs to the agmatine deiminase family.

It catalyses the reaction agmatine + H2O = N-carbamoylputrescine + NH4(+). In Streptococcus pneumoniae (strain Taiwan19F-14), this protein is Putative agmatine deiminase.